The chain runs to 1515 residues: Glutamate synthase [NADPH] large chain (1515 aa).

Positions 1-36 (MTTELNQGEQFVADFRANAAALTTANAYNPEDEHDA) are excised as a propeptide. Cys-37 functions as the For GATase activity in the catalytic mechanism. Residues 37-432 (CGVGFIAAID…PGEMIAVDLQ (396 aa)) form the Glutamine amidotransferase type-2 domain. Residues 916–937 (AKSDSGEGGEDPARFRPDKNGD) form a disordered region. Residues 926 to 936 (DPARFRPDKNG) show a composition bias toward basic and acidic residues. FMN-binding positions include 1085 to 1142 (LSEV…IMVR) and 1086 to 1142 (SEVH…IMVR). 3 residues coordinate [3Fe-4S] cluster: Cys-1138, Cys-1144, and Cys-1149.

It belongs to the glutamate synthase family. Aggregate of 4 catalytic active heterodimers, consisting of a large and a small subunit. Requires [3Fe-4S] cluster as cofactor. FAD serves as cofactor. The cofactor is FMN.

The catalysed reaction is 2 L-glutamate + NADP(+) = L-glutamine + 2-oxoglutarate + NADPH + H(+). Its pathway is amino-acid biosynthesis; L-glutamate biosynthesis via GLT pathway; L-glutamate from 2-oxoglutarate and L-glutamine (NADP(+) route): step 1/1. The protein operates within energy metabolism; nitrogen metabolism. The sequence is that of Glutamate synthase [NADPH] large chain (gltB) from Azospirillum brasilense.